Here is an 862-residue protein sequence, read N- to C-terminus: MMRLKILRASRINPALLRLRPPHLYSINKSQAFRFYATDIEDLKRQSDRTESDNSASTTGVIDKEANEVLLYYSFSNSRNFVKQYISRFLPSKFLGEQVEEKVKDVSYPLPQNSSITEVLHLPRDSGAFVKFKYSPSLTAKEFIQDIRSNIAESNTKRYSNIFMKAIGFVWDRSTQVYTVKGVPWIEDLKRFPSQKIGITYEGNPLTEEELYVLFRRYGLIDDIKVESTQSFVLFDTVRAAICAKHCITGMQLNGGKTTIHIQYVPVKKTNFIIEMISSHTKIALPIILALLATFAVLIFDPIREWFIQLKITRASHSFDEFKENKWFKIVYIPYKQLLNAVSSGYDYIDTQLHEVTGINNVDECLDDNQVLQEKNWESNMFWRERFEKAKQLKLWIMENIDTFIIVKGPQGSGKEEFVVDHTLMADAKLRKKVLLLECDELSKARSENSLIASTASQLGYFPVFTWTNSISQFIDLGLQGLTGQKSGLSESKETQIKNMFSLATQAIRSLTDGDYNKYKTNIEKKNRRLKDDEKIEVLRLEEFLAQHPESKPIIVINKFARKADVLSNDFIFPLIADWASGLIQNNIAHVVFTTADVGSLQHLNDALPNQVFKNISLSDASIASSKQYICDALKMKDTATLDDCIAPLGGRMLDLQAFIRRIKSGEDPLQAIDEMVNQAAELITTFFLHEHKFSNDDSNWNPSQVWLIMKLLSKKDVIDYDSLIKLPLFKQSKETLDTLSTLEKYDLVSLKREKGVLSKILTGRPLFTAAFENIISDVRIWKLYETQYLLNLVSLEVQKLTKFENELTTIYKINKLDGRIDYLSKKIDESNQKIVDYEKEIKDIAAYKGEPKQRHSFLGIF.

Residues 1 to 36 (MMRLKILRASRINPALLRLRPPHLYSINKSQAFRFY) constitute a mitochondrion transit peptide. Residues 37–282 (ATDIEDLKRQ…IIEMISSHTK (246 aa)) lie on the Mitochondrial matrix side of the membrane. An RRM domain is found at 176–267 (QVYTVKGVPW…TTIHIQYVPV (92 aa)). Residues 283–303 (IALPIILALLATFAVLIFDPI) traverse the membrane as a helical segment. The Mitochondrial intermembrane portion of the chain corresponds to 304 to 862 (REWFIQLKIT…KQRHSFLGIF (559 aa)). Residues 820–847 (RIDYLSKKIDESNQKIVDYEKEIKDIAA) are a coiled coil.

It belongs to the YME2 family.

It is found in the mitochondrion inner membrane. Its function is as follows. Plays a role in maintaining the mitochondrial genome and in controlling the mtDNA escape. Involved in the regulation of mtDNA nucleotide structure and number. May have a dispensable role in early maturation of pre-rRNA. The protein is Mitochondrial escape protein 2 (YME2) of Lodderomyces elongisporus (strain ATCC 11503 / CBS 2605 / JCM 1781 / NBRC 1676 / NRRL YB-4239) (Yeast).